Reading from the N-terminus, the 95-residue chain is uncharacterized protein (95 aa).

Residues 12–32 (IASLVVSVVVLLIGLILWFFI) form a helical membrane-spanning segment.

It localises to the cell membrane. This is an uncharacterized protein from Escherichia coli O157:H7.